A 354-amino-acid chain; its full sequence is Chorismate synthase (354 aa).

An NADP(+)-binding site is contributed by arginine 46. Residues arginine 123–serine 125, asparagine 233–glycine 234, glycine 273, lysine 288–serine 292, and arginine 314 contribute to the FMN site.

It belongs to the chorismate synthase family. As to quaternary structure, homotetramer. The cofactor is FMNH2.

The enzyme catalyses 5-O-(1-carboxyvinyl)-3-phosphoshikimate = chorismate + phosphate. The protein operates within metabolic intermediate biosynthesis; chorismate biosynthesis; chorismate from D-erythrose 4-phosphate and phosphoenolpyruvate: step 7/7. Its function is as follows. Catalyzes the anti-1,4-elimination of the C-3 phosphate and the C-6 proR hydrogen from 5-enolpyruvylshikimate-3-phosphate (EPSP) to yield chorismate, which is the branch point compound that serves as the starting substrate for the three terminal pathways of aromatic amino acid biosynthesis. This reaction introduces a second double bond into the aromatic ring system. This Campylobacter curvus (strain 525.92) protein is Chorismate synthase.